We begin with the raw amino-acid sequence, 467 residues long: Chromosomal replication initiator protein DnaA (467 aa).

The domain I, interacts with DnaA modulators stretch occupies residues 1–90 (MSLSLWQQCL…KPVTQTPQAA (90 aa)). Residues 91–130 (VTSNVAAPAQVAQTQPQRAAPSTRSGWDNVPAPAEPTYRS) form a domain II region. Residues 98–111 (PAQVAQTQPQRAAP) show a composition bias toward low complexity. A disordered region spans residues 98–119 (PAQVAQTQPQRAAPSTRSGWDN). Positions 131 to 347 (NVNVKHTFDN…GALNRVIANA (217 aa)) are domain III, AAA+ region. Glycine 175, glycine 177, lysine 178, and threonine 179 together coordinate ATP. Residues 348–467 (NFTGRAITID…FSNLIRTLSS (120 aa)) are domain IV, binds dsDNA.

Belongs to the DnaA family. Oligomerizes as a right-handed, spiral filament on DNA at oriC.

The protein resides in the cytoplasm. Its function is as follows. Plays an essential role in the initiation and regulation of chromosomal replication. ATP-DnaA binds to the origin of replication (oriC) to initiate formation of the DNA replication initiation complex once per cell cycle. Binds the DnaA box (a 9 base pair repeat at the origin) and separates the double-stranded (ds)DNA. Forms a right-handed helical filament on oriC DNA; dsDNA binds to the exterior of the filament while single-stranded (ss)DNA is stabiized in the filament's interior. The ATP-DnaA-oriC complex binds and stabilizes one strand of the AT-rich DNA unwinding element (DUE), permitting loading of DNA polymerase. After initiation quickly degrades to an ADP-DnaA complex that is not apt for DNA replication. Binds acidic phospholipids. This Shigella boydii serotype 4 (strain Sb227) protein is Chromosomal replication initiator protein DnaA.